We begin with the raw amino-acid sequence, 20 residues long: U27-ctenitoxin-Pn1a (20 aa).

The segment at L1–T20 is disordered. The segment covering G11 to T20 has biased composition (polar residues).

In terms of processing, contains 4 disulfide bonds. Expressed by the venom gland.

The protein resides in the secreted. Its function is as follows. Has a vascular smooth muscle contracting activity. Causes short-lived contractions of both arterial and venous rabbit vessels. The sequence is that of U27-ctenitoxin-Pn1a from Phoneutria nigriventer (Brazilian armed spider).